Reading from the N-terminus, the 435-residue chain is Exopolysaccharide production protein ExoQ (435 aa).

10 consecutive transmembrane segments (helical) span residues 11 to 31 (PGANEVYGIFALALSLFVFAY), 35 to 55 (FGQVSILAYYGLWLPLVLVDY), 65 to 85 (YLWIFAFTIFACITIFWSAAP), 117 to 137 (GMIAGAAIVLLYSLLFGTYHY), 156 to 176 (LGFYASLGIYFAFAAVFVLGE), 178 to 198 (GLWMGAAGGAGLLAAYCLLTS), 203 to 223 (SVLTTAAVIGLCLGMRAITAL), 230 to 250 (LLFIAASVFGGVAAVAMIYAG), 325 to 345 (VVETGLIGLILLTMVLVTAFF), and 361 to 381 (MVLFGVGALLFVRAFVEIDIL).

The protein localises to the cell membrane. It functions in the pathway glycan metabolism; exopolysaccharide biosynthesis. Its function is as follows. Involved in the production of exopolysaccharide. The protein is Exopolysaccharide production protein ExoQ (exoQ) of Rhizobium meliloti (strain 1021) (Ensifer meliloti).